Reading from the N-terminus, the 420-residue chain is Nucleobindin-2 (420 aa).

An N-terminal signal peptide occupies residues 1 to 24 (MRWRIIQVQYCFLLVPCMLTALEA). The DNA-binding element occupies 171–223 (RTRHEEFKKYEMMKEHERREYLKTLSEEKRKEEESKFEEMKRKHEDHPKVNHP). The segment at 193–225 (KTLSEEKRKEEESKFEEMKRKHEDHPKVNHPGS) is disordered. Positions 213–420 (KHEDHPKVNH…AGELKFEPHT (208 aa)) are binds to necdin. 2 consecutive EF-hand domains span residues 241–276 (PNDF…ELEK) and 293–328 (ERLR…KEFL). 8 residues coordinate Ca(2+): Asp-254, Asn-256, Asp-258, Glu-265, Asp-306, Asn-308, Asp-310, and Glu-317. The short motif at 304–334 (EIDNNKDRLVTLEEFLRATEKKEFLEPDSWE) is the GBA element. Ser-332 is subject to Phosphoserine. A compositionally biased stretch (basic and acidic residues) spans 365–389 (AEELQKQKEDLQRQHDHLEAQKQEY). The tract at residues 365 to 420 (AEELQKQKEDLQRQHDHLEAQKQEYHQAVQHLEQKKLQQGIAPSGPAGELKFEPHT) is disordered.

The protein belongs to the nucleobindin family. Interacts (via GBA motif) with guanine nucleotide-binding protein G(i) alpha subunit GNAI3. Preferentially interacts with inactive rather than active GNAI3. Interaction with GNAI3 is inhibited when NUCB2 binds calcium, probably due to a conformational change which renders the GBA motif inaccessible. Binds to the postmitotic growth suppressor NDN; coexpression abolishes NUCB2 secretion. Interacts with MC4R. Found in liver, heart, thymus, muscle, intestine, kidney, lung, spleen and throughout the brain, in cerebral cortex, hippocampus, hypothalamus and medulla oblongata. Nucb2 and necdin levels were higher in postmitotic neurons.

It is found in the cytoplasm. The protein localises to the perikaryon. Its subcellular location is the endoplasmic reticulum. The protein resides in the golgi apparatus. It localises to the nucleus envelope. It is found in the membrane. The protein localises to the secreted. In terms of biological role, calcium-binding protein which may have a role in calcium homeostasis. Acts as a non-receptor guanine nucleotide exchange factor which binds to and activates guanine nucleotide-binding protein (G-protein) alpha subunit GNAI3. Functionally, anorexigenic peptide, seems to play an important role in hypothalamic pathways regulating food intake and energy homeostasis, acting in a leptin-independent manner. May also exert hypertensive roles and modulate blood pressure through directly acting on peripheral arterial resistance. In intestinal epithelial cells, plays a role in the inhibition of hepatic glucose production via MC4R receptor leading to increased cyclic adenosine monophosphate (cAMP) levels and glucagon-like peptide 1 (GLP-1) secretion. The chain is Nucleobindin-2 (Nucb2) from Mus musculus (Mouse).